The primary structure comprises 346 residues: Uroporphyrinogen decarboxylase (346 aa).

Substrate is bound by residues 21–25, Phe40, Asp71, Tyr146, Ser201, and His316; that span reads RQAGR.

It belongs to the uroporphyrinogen decarboxylase family. Homodimer.

Its subcellular location is the cytoplasm. The catalysed reaction is uroporphyrinogen III + 4 H(+) = coproporphyrinogen III + 4 CO2. It functions in the pathway porphyrin-containing compound metabolism; protoporphyrin-IX biosynthesis; coproporphyrinogen-III from 5-aminolevulinate: step 4/4. Catalyzes the decarboxylation of four acetate groups of uroporphyrinogen-III to yield coproporphyrinogen-III. The polypeptide is Uroporphyrinogen decarboxylase (Rickettsia conorii (strain ATCC VR-613 / Malish 7)).